The primary structure comprises 58 residues: UPF0391 membrane protein GM21_0108 (58 aa).

The next 2 helical transmembrane spans lie at 4 to 24 (WALI…GGIA) and 33 to 53 (VLFY…LLAG).

It belongs to the UPF0391 family.

Its subcellular location is the cell membrane. In Geobacter sp. (strain M21), this protein is UPF0391 membrane protein GM21_0108.